Reading from the N-terminus, the 141-residue chain is Nucleoside diphosphate kinase (141 aa).

Residues K11, F59, R87, T93, R104, and N114 each coordinate ATP. The active-site Pros-phosphohistidine intermediate is H117.

Belongs to the NDK family. As to quaternary structure, homotetramer. It depends on Mg(2+) as a cofactor.

It localises to the cytoplasm. The enzyme catalyses a 2'-deoxyribonucleoside 5'-diphosphate + ATP = a 2'-deoxyribonucleoside 5'-triphosphate + ADP. The catalysed reaction is a ribonucleoside 5'-diphosphate + ATP = a ribonucleoside 5'-triphosphate + ADP. Major role in the synthesis of nucleoside triphosphates other than ATP. The ATP gamma phosphate is transferred to the NDP beta phosphate via a ping-pong mechanism, using a phosphorylated active-site intermediate. The sequence is that of Nucleoside diphosphate kinase from Vibrio campbellii (strain ATCC BAA-1116).